The following is a 117-amino-acid chain: Large ribosomal subunit protein bL20 (117 aa).

The protein belongs to the bacterial ribosomal protein bL20 family.

In terms of biological role, binds directly to 23S ribosomal RNA and is necessary for the in vitro assembly process of the 50S ribosomal subunit. It is not involved in the protein synthesizing functions of that subunit. This is Large ribosomal subunit protein bL20 from Trichlorobacter lovleyi (strain ATCC BAA-1151 / DSM 17278 / SZ) (Geobacter lovleyi).